The primary structure comprises 584 residues: Keratin, type I cytoskeletal 10 (584 aa).

The segment covering 1-15 (MSVRYSSSKHYSSSR) has biased composition (low complexity). Positions 1-24 (MSVRYSSSKHYSSSRSGGGGGGGG) are disordered. The segment at 1–145 (MSVRYSSSKH…GGDGGLLSGN (145 aa)) is head. Residues Ser-14, Ser-16, Ser-42, Ser-53, Ser-56, and Ser-170 each carry the phosphoserine modification. The tract at residues 146–181 (EKVTMQNLNDRLASYLDKVRALEESNYELEGKIKEW) is coil 1A. The IF rod domain occupies 146–460 (EKVTMQNLND…SLLEGEGSSG (315 aa)). A linker 1 region spans residues 182-202 (YEKHGNSHQGEPRDYSKYYKT). A coil 1B region spans residues 203-294 (IDDLKNQILN…KNHEEEMKDL (92 aa)). The segment at 295-317 (RNVSTGDVNVEMNAAPGVDLTQL) is linker 12. A coil 2 region spans residues 318–456 (LNNMRSQYEQ…QTYRSLLEGE (139 aa)). The segment at 453 to 584 (LEGEGSSGGG…GESSSKGPRY (132 aa)) is disordered. The segment covering 457 to 563 (GSSGGGGRGG…GGGYGGGSSS (107 aa)) has biased composition (gly residues). The interval 457-584 (GSSGGGGRGG…GESSSKGPRY (128 aa)) is tail. A compositionally biased stretch (low complexity) spans 564 to 584 (GGHKSSSSGSVGESSSKGPRY).

This sequence belongs to the intermediate filament family. As to quaternary structure, heterotetramer of two type I and two type II keratins. Heterodimer with KRT1. Two heterodimers of KRT1 and KRT10 form a heterotetramer. The KRT10 subunit in the heterotetramer is probably disulfide-linked. Interacts with PLEC isoform 1C, when in a heterodimer with KRT1. In terms of assembly, (Microbial infection) Interacts (via C-terminal tail domain) with the S.aureus clumping factor, clfB; this interaction probably mediates S.aureus attachment to the keratinized squamous epithelial cells from the nasal cavity. (Microbial infection) Interacts (via the C-terminal tail domain) with S.pneumoniae serine-rich repeat protein PsrP; this interaction probably mediates S.pneumoniae adherence to lung tissue and subsequent pathogenesis. Neither protein has to be glycosylated for the interaction to occur. As to expression, seen in all suprabasal cell layers including stratum corneum. Expressed on the surface of lung cell lines. Localized on the surface of desquamated nasal epithelial cells (at protein level).

The protein localises to the secreted. Its subcellular location is the extracellular space. It localises to the cell surface. The protein resides in the cytoplasm. In terms of biological role, plays a role in the establishment of the epidermal barrier on plantar skin. Involved in the maintenance of cell layer development and keratin filament bundles in suprabasal cells of the epithelium. Functionally, (Microbial infection) Acts as a mediator of S.aureus adherence to desquamated nasal epithelial cells via clfB, and hence may play a role in nasal colonization. (Microbial infection) Binds S.pneumoniae PsrP, mediating adherence of the bacteria to lung cell lines. Reduction of levels of KRT10 keratin decrease adherence, overexpression increases adherence. Neither protein has to be glycosylated for the interaction to occur. In Homo sapiens (Human), this protein is Keratin, type I cytoskeletal 10 (KRT10).